A 169-amino-acid polypeptide reads, in one-letter code: Ribosomal RNA large subunit methyltransferase H (169 aa).

Residues leucine 85, glycine 117, and 136 to 141 (LGELTW) contribute to the S-adenosyl-L-methionine site.

It belongs to the RNA methyltransferase RlmH family. In terms of assembly, homodimer.

The protein localises to the cytoplasm. It catalyses the reaction pseudouridine(1915) in 23S rRNA + S-adenosyl-L-methionine = N(3)-methylpseudouridine(1915) in 23S rRNA + S-adenosyl-L-homocysteine + H(+). Specifically methylates the pseudouridine at position 1915 (m3Psi1915) in 23S rRNA. This chain is Ribosomal RNA large subunit methyltransferase H, found in Brucella ovis (strain ATCC 25840 / 63/290 / NCTC 10512).